Consider the following 346-residue polypeptide: [LysW]-lysine/[LysW]-ornithine hydrolase (346 aa).

Histidine 68 serves as a coordination point for Zn(2+). The active site involves aspartate 70. A Zn(2+)-binding site is contributed by aspartate 92. The active-site Proton acceptor is the glutamate 122. Zn(2+)-binding residues include glutamate 123, glutamate 146, and histidine 317.

It belongs to the peptidase M20A family. LysK subfamily. It depends on Zn(2+) as a cofactor. The cofactor is Co(2+).

It localises to the cytoplasm. It carries out the reaction [amino-group carrier protein]-C-terminal-gamma-(L-lysyl)-L-glutamate + H2O = [amino-group carrier protein]-C-terminal-L-glutamate + L-lysine. It catalyses the reaction [amino-group carrier protein]-C-terminal-gamma-(L-ornithyl)-L-glutamate + H2O = [amino-group carrier protein]-C-terminal-L-glutamate + L-ornithine. It participates in amino-acid biosynthesis; L-lysine biosynthesis via AAA pathway; L-lysine from L-alpha-aminoadipate (Thermus route): step 5/5. Its pathway is amino-acid biosynthesis; L-arginine biosynthesis. Functionally, catalyzes the release of L-lysine from [LysW]-gamma-L-lysine and the release of L-ornithine from [LysW]-L-ornithine. The chain is [LysW]-lysine/[LysW]-ornithine hydrolase from Saccharolobus islandicus (strain M.16.4 / Kamchatka #3) (Sulfolobus islandicus).